A 179-amino-acid chain; its full sequence is Tetratricopeptide repeat protein 36 (179 aa).

TPR repeat units follow at residues 43 to 76 (SSQLEREAVRLAESMNVTDAIEKFTEAIQVCPLN), 77 to 110 (PSAYNNRAQAYRLQNSPEKALEDLNESLRLAGPK), and 115 to 148 (CQAYVQRASIYRLQGDDEKARADFAAAAELGSSF).

The protein belongs to the TTC36 family.

In Caenorhabditis briggsae, this protein is Tetratricopeptide repeat protein 36.